Reading from the N-terminus, the 822-residue chain is Collagen alpha chain CG42342 (822 aa).

Disordered stretches follow at residues 1–45 (MRKH…VEAP) and 66–99 (RLAPPPCQHPINNSNNNSNISNNSSNSSSSKERP). The Cytoplasmic portion of the chain corresponds to 1–104 (MRKHKAPPSG…SKERPRPTVR (104 aa)). Positions 11–25 (SPRTMAQDNSQSEPS) are enriched in polar residues. A compositionally biased stretch (low complexity) spans 76–94 (INNSNNNSNISNNSSNSSS). The chain crosses the membrane as a helical; Signal-anchor for type II membrane protein span at residues 105-125 (FISLLHVASYVLCLCAFSFAL). Residues 126–822 (YGNVRQTRLE…EYQDNLHNNE (697 aa)) lie on the Extracellular side of the membrane. The stretch at 131–162 (QTRLEQRMQRLQQLDARIVELELRLEQQQLLH) forms a coiled coil. Disordered regions lie at residues 169 to 188 (QVLASHPSDRDSSNSNNGSQ), 205 to 297 (VSHL…GHPG), and 345 to 822 (LKGE…HNNE). Residues 194-222 (VRRELHRLRRDVSHLQLTRRQQRRQAAEA) adopt a coiled-coil conformation. 7 Collagen-like domains span residues 241–299 (QPGP…PGMD), 350–409 (GEPG…KGDR), 430–469 (GPPGPAGPPGPPGEPGARGEPGPIGPAGPPGEKGPRGKRG), 493–526 (RGPPGPPGIAGKDGRDGRDGSKGEPGEPGEPGSL), 527–586 (GPRG…KGDK), 621–680 (GPPG…SGKA), and 681–740 (GIPG…KGEQ). Over residues 242-251 (PGPPGPPGPP) the composition is skewed to pro residues. Residues 284–293 (PGDKGQKGDV) are compositionally biased toward basic and acidic residues. Low complexity predominate over residues 360 to 402 (EAGQPGAPGERGPPGEIGAQGPQGEAGQPGVAGPPGVAGAPGT). Residues 403–412 (KGDKGDRGDR) show a composition bias toward basic and acidic residues. The segment covering 431–443 (PPGPAGPPGPPGE) has biased composition (pro residues). The segment covering 504–517 (KDGRDGRDGSKGEP) has biased composition (basic and acidic residues). Over residues 522–540 (EPGSLGPRGLDGLPGEPGI) the composition is skewed to low complexity. Pro residues predominate over residues 567–579 (LMGPPGLPGPPGY). Positions 583–602 (KGDKGDRGDSYRKMRRRQDD) are enriched in basic and acidic residues. The span at 619 to 628 (PPGPPGPMGP) shows a compositional bias: pro residues. The segment covering 638-655 (RGLDGRKGDPGEKGHKGD) has biased composition (basic and acidic residues). The segment covering 658 to 668 (PMGLPGPMGMR) has biased composition (low complexity). Positions 790 to 822 (TSDYEQEEEEDDEQAEDNENEYDEYQDNLHNNE) form a coiled coil. A compositionally biased stretch (acidic residues) spans 793-815 (YEQEEEEDDEQAEDNENEYDEYQ).

The protein resides in the cell membrane. The chain is Collagen alpha chain CG42342 from Drosophila melanogaster (Fruit fly).